Reading from the N-terminus, the 480-residue chain is MASFVEMRKLAEAKVQNMIRTIVKPKEQNGNVEPKKEEDEKFESTYKQNENTQITPSSFGKRPLYSKVDINCDKWLMTLDEESRLKIDNPPSLVDGLSKETESELRYLGCELIQQGAILLKLPQTAAATGQILFQRYYYQKSFVRYHFEHAVQACLLLASKIEEEPRRPREVYNVFHRLERLHRLQQSGHDINKETTRGMKPPAVDMNYINTKQHMINSERRILATLGFVVHVKHPHRLIVAYGHTLGITQSRPDILQRSWNYMNDGLRTDIFMRYKPETIACACIFLAARTVENPIALPSTPFHWFEAFDTSDRDVEAIALQLVGLYARRTFPNWPRIKAELDALRSVKDAEMKAVKAKEIAENLAKMAPDGEKSTSTVTIGKDSRKVSPDRKNGTKDRGEADRGKKEKDRHRRRSNDRDGRGDRRDRDKDRGDRRKDEKKDRRKRTRSRSRDRKDKNRNRDVGKRYRKESSTPPRSRR.

Residues 25-58 are disordered; the sequence is PKEQNGNVEPKKEEDEKFESTYKQNENTQITPSS. Residues 33–44 are compositionally biased toward basic and acidic residues; that stretch reads EPKKEEDEKFES. Residues 45–58 are compositionally biased toward polar residues; that stretch reads TYKQNENTQITPSS. One can recognise a Cyclin N-terminal domain in the interval 91-230; that stretch reads PSLVDGLSKE…RRILATLGFV (140 aa). The disordered stretch occupies residues 368-480; sequence KMAPDGEKST…ESSTPPRSRR (113 aa). 2 stretches are compositionally biased toward basic and acidic residues: residues 384 to 409 and 418 to 442; these read KDSRKVSPDRKNGTKDRGEADRGKKE and NDRDGRGDRRDRDKDRGDRRKDEKK. A compositionally biased stretch (basic residues) spans 443–453; it reads DRRKRTRSRSR. Residues 454–472 are compositionally biased toward basic and acidic residues; the sequence is DRKDKNRNRDVGKRYRKES.

The protein belongs to the cyclin family.

In terms of biological role, involved in pre-mRNA splicing. Functions in association with cyclin-dependent kinases (CDKs). Involved in induction of expression of heat shock protein hsp-16.2 in response to heat shock. Plays a role in male tail development, perhaps acting together with cell cycle regulators cdc-25.2, cdk-1, cyb-3, and cyd-1. This chain is Cyclin L homolog cyl-1, found in Caenorhabditis elegans.